Reading from the N-terminus, the 96-residue chain is Putative pterin-4-alpha-carbinolamine dehydratase (96 aa).

It belongs to the pterin-4-alpha-carbinolamine dehydratase family.

The catalysed reaction is (4aS,6R)-4a-hydroxy-L-erythro-5,6,7,8-tetrahydrobiopterin = (6R)-L-erythro-6,7-dihydrobiopterin + H2O. The polypeptide is Putative pterin-4-alpha-carbinolamine dehydratase (Rhodospirillum rubrum (strain ATCC 11170 / ATH 1.1.1 / DSM 467 / LMG 4362 / NCIMB 8255 / S1)).